Reading from the N-terminus, the 28-residue chain is uncharacterized protein (28 aa).

The protein localises to the cell inner membrane. This is an uncharacterized protein from Escherichia coli (strain K12).